Reading from the N-terminus, the 371-residue chain is GDP-perosamine synthase (371 aa).

Residue K186 is modified to N6-(pyridoxal phosphate)lysine.

It belongs to the DegT/DnrJ/EryC1 family. Homodimer. It depends on pyridoxal 5'-phosphate as a cofactor.

The catalysed reaction is GDP-alpha-D-perosamine + 2-oxoglutarate = GDP-4-dehydro-alpha-D-rhamnose + L-glutamate. Its pathway is bacterial outer membrane biogenesis; LPS O-antigen biosynthesis. Catalyzes the synthesis of GDP-perosamine from GDP-4-keto-6-deoxy-D-mannose and L-glutamate. Can use only L-glutamate as amino donor. In vitro, can also use GDP-4-keto-3,6-dideoxymannose to produce GDP-3-deoxyperosamine. Involved in the formation of S-LPS, which is required for attachment of the protein S-layer to the outer membrane surface. This chain is GDP-perosamine synthase, found in Caulobacter vibrioides (strain ATCC 19089 / CIP 103742 / CB 15) (Caulobacter crescentus).